A 187-amino-acid polypeptide reads, in one-letter code: Elongation factor P (187 aa).

The protein belongs to the elongation factor P family.

The protein resides in the cytoplasm. It functions in the pathway protein biosynthesis; polypeptide chain elongation. Involved in peptide bond synthesis. Stimulates efficient translation and peptide-bond synthesis on native or reconstituted 70S ribosomes in vitro. Probably functions indirectly by altering the affinity of the ribosome for aminoacyl-tRNA, thus increasing their reactivity as acceptors for peptidyl transferase. This chain is Elongation factor P, found in Syntrophus aciditrophicus (strain SB).